We begin with the raw amino-acid sequence, 153 residues long: Transcriptional repressor NrdR (153 aa).

The segment at 1-22 (MRCPACHHNGTRVLDSRPAHEG) is disordered. Residues 3–34 (CPACHHNGTRVLDSRPAHEGRSIRRRRECESC) fold into a zinc finger. The ATP-cone domain maps to 49–139 (LIVVKKDGTR…VYRQFKDINV (91 aa)).

The protein belongs to the NrdR family. Zn(2+) is required as a cofactor.

Its function is as follows. Negatively regulates transcription of bacterial ribonucleotide reductase nrd genes and operons by binding to NrdR-boxes. The chain is Transcriptional repressor NrdR from Halalkalibacterium halodurans (strain ATCC BAA-125 / DSM 18197 / FERM 7344 / JCM 9153 / C-125) (Bacillus halodurans).